Reading from the N-terminus, the 275-residue chain is Phosphonoacetaldehyde hydrolase (275 aa).

The active-site Nucleophile is the D15. 2 residues coordinate Mg(2+): D15 and A17. The active-site Schiff-base intermediate with substrate is K56. D189 provides a ligand contact to Mg(2+).

This sequence belongs to the HAD-like hydrolase superfamily. PhnX family. As to quaternary structure, homodimer. It depends on Mg(2+) as a cofactor.

The catalysed reaction is phosphonoacetaldehyde + H2O = acetaldehyde + phosphate + H(+). Its function is as follows. Involved in phosphonate degradation. This is Phosphonoacetaldehyde hydrolase from Pseudomonas putida (Arthrobacter siderocapsulatus).